We begin with the raw amino-acid sequence, 222 residues long: THAP domain-containing protein 6 (222 aa).

Residues 1-89 (MVKCCSAIGC…LKPGVIPSIF (89 aa)) form a THAP-type zinc finger. The HCFC1-binding motif (HBM) signature appears at 139–142 (EHSY). Positions 149–194 (KKLKHKLDHVIGELEDTKESLRNVLDREKRFQKSLRKTIRELKDEC) form a coiled coil.

The protein is THAP domain-containing protein 6 (THAP6) of Homo sapiens (Human).